Consider the following 248-residue polypeptide: UPF0736 protein BT9727_1080 (248 aa).

This sequence belongs to the UPF0736 family.

This is UPF0736 protein BT9727_1080 from Bacillus thuringiensis subsp. konkukian (strain 97-27).